The following is a 112-amino-acid chain: Putative pterin-4-alpha-carbinolamine dehydratase (112 aa).

It belongs to the pterin-4-alpha-carbinolamine dehydratase family.

It catalyses the reaction (4aS,6R)-4a-hydroxy-L-erythro-5,6,7,8-tetrahydrobiopterin = (6R)-L-erythro-6,7-dihydrobiopterin + H2O. The polypeptide is Putative pterin-4-alpha-carbinolamine dehydratase (Shewanella frigidimarina (strain NCIMB 400)).